The sequence spans 98 residues: UPF0473 protein LSL_1108 (98 aa).

It belongs to the UPF0473 family.

In Ligilactobacillus salivarius (strain UCC118) (Lactobacillus salivarius), this protein is UPF0473 protein LSL_1108.